Reading from the N-terminus, the 158-residue chain is NAD(P)H-quinone oxidoreductase subunit J, chloroplastic (158 aa).

This sequence belongs to the complex I 30 kDa subunit family. As to quaternary structure, NDH is composed of at least 16 different subunits, 5 of which are encoded in the nucleus.

The protein localises to the plastid. The protein resides in the chloroplast thylakoid membrane. It carries out the reaction a plastoquinone + NADH + (n+1) H(+)(in) = a plastoquinol + NAD(+) + n H(+)(out). It catalyses the reaction a plastoquinone + NADPH + (n+1) H(+)(in) = a plastoquinol + NADP(+) + n H(+)(out). Its function is as follows. NDH shuttles electrons from NAD(P)H:plastoquinone, via FMN and iron-sulfur (Fe-S) centers, to quinones in the photosynthetic chain and possibly in a chloroplast respiratory chain. The immediate electron acceptor for the enzyme in this species is believed to be plastoquinone. Couples the redox reaction to proton translocation, and thus conserves the redox energy in a proton gradient. This Pelargonium hortorum (Common geranium) protein is NAD(P)H-quinone oxidoreductase subunit J, chloroplastic.